Here is a 317-residue protein sequence, read N- to C-terminus: MSSFLRALTLRQLQIFVTVARHASFVRAAEELHLTQPAVSMQVKQLESVVGMALFERVKGQLTLTEPGDRLLHHASRILGEVKDAEEGLQAVKDVEQGSITIGLISTSKYFAPKLLAGFTALHPGVDLRIAEGNRETLLRLLQDNAIDLALMGRPPRELDAVSEPIAAHPHVLVASPRHPLHDAKGFDLQELRHETFLLREPGSGTRTVAEYMFRDHLFTPAKVITLGSNETIKQAVMAGMGISLLSLHTLGLELRTGEIGLLDVAGTPIERIWHVAHMSSKRLSPASESCRAYLLEHTAEFLGREYGGLMPGRRVA.

The region spanning 8-65 (LTLRQLQIFVTVARHASFVRAAEELHLTQPAVSMQVKQLESVVGMALFERVKGQLTLT) is the HTH lysR-type domain. The segment at residues 25–44 (FVRAAEELHLTQPAVSMQVK) is a DNA-binding region (H-T-H motif).

It belongs to the LysR transcriptional regulatory family.

Functionally, trans-acting transcriptional regulator of RuBisCO genes (cfxLS) expression. The sequence is that of HTH-type transcriptional regulator CfxR (cfxR) from Cupriavidus necator (strain ATCC 17699 / DSM 428 / KCTC 22496 / NCIMB 10442 / H16 / Stanier 337) (Ralstonia eutropha).